Consider the following 472-residue polypeptide: Argininosuccinate lyase (472 aa).

The protein belongs to the lyase 1 family. Argininosuccinate lyase subfamily.

It localises to the cytoplasm. It catalyses the reaction 2-(N(omega)-L-arginino)succinate = fumarate + L-arginine. The protein operates within amino-acid biosynthesis; L-arginine biosynthesis; L-arginine from L-ornithine and carbamoyl phosphate: step 3/3. The sequence is that of Argininosuccinate lyase from Synechococcus sp. (strain CC9311).